The following is a 476-amino-acid chain: Bifunctional protein HldE (476 aa).

Residues 1–319 (MKITLPEYDK…ANAVYSQQEI (319 aa)) are ribokinase. Position 196 to 199 (196 to 199 (NLAE)) interacts with ATP. The active site involves D265. A cytidylyltransferase region spans residues 345–476 (MTNGCFDILH…EIIKTIRNNS (132 aa)).

This sequence in the N-terminal section; belongs to the carbohydrate kinase PfkB family. It in the C-terminal section; belongs to the cytidylyltransferase family. Homodimer.

It carries out the reaction D-glycero-beta-D-manno-heptose 7-phosphate + ATP = D-glycero-beta-D-manno-heptose 1,7-bisphosphate + ADP + H(+). The enzyme catalyses D-glycero-beta-D-manno-heptose 1-phosphate + ATP + H(+) = ADP-D-glycero-beta-D-manno-heptose + diphosphate. It participates in nucleotide-sugar biosynthesis; ADP-L-glycero-beta-D-manno-heptose biosynthesis; ADP-L-glycero-beta-D-manno-heptose from D-glycero-beta-D-manno-heptose 7-phosphate: step 1/4. The protein operates within nucleotide-sugar biosynthesis; ADP-L-glycero-beta-D-manno-heptose biosynthesis; ADP-L-glycero-beta-D-manno-heptose from D-glycero-beta-D-manno-heptose 7-phosphate: step 3/4. Catalyzes the phosphorylation of D-glycero-D-manno-heptose 7-phosphate at the C-1 position to selectively form D-glycero-beta-D-manno-heptose-1,7-bisphosphate. Functionally, catalyzes the ADP transfer from ATP to D-glycero-beta-D-manno-heptose 1-phosphate, yielding ADP-D-glycero-beta-D-manno-heptose. The sequence is that of Bifunctional protein HldE from Psychromonas ingrahamii (strain DSM 17664 / CCUG 51855 / 37).